The chain runs to 172 residues: Lipoprotein signal peptidase (172 aa).

A run of 3 helical transmembrane segments spans residues L10–V30, W68–L88, and S98–M118. Residues D124 and D142 contribute to the active site. The helical transmembrane segment at F138–F158 threads the bilayer.

It belongs to the peptidase A8 family.

Its subcellular location is the cell inner membrane. It catalyses the reaction Release of signal peptides from bacterial membrane prolipoproteins. Hydrolyzes -Xaa-Yaa-Zaa-|-(S,diacylglyceryl)Cys-, in which Xaa is hydrophobic (preferably Leu), and Yaa (Ala or Ser) and Zaa (Gly or Ala) have small, neutral side chains.. Its pathway is protein modification; lipoprotein biosynthesis (signal peptide cleavage). This protein specifically catalyzes the removal of signal peptides from prolipoproteins. The polypeptide is Lipoprotein signal peptidase (Xanthomonas axonopodis pv. citri (strain 306)).